A 213-amino-acid chain; its full sequence is Uridine kinase (213 aa).

15 to 22 contacts ATP; the sequence is GASASGKS.

The protein belongs to the uridine kinase family.

The protein localises to the cytoplasm. It catalyses the reaction uridine + ATP = UMP + ADP + H(+). The catalysed reaction is cytidine + ATP = CMP + ADP + H(+). Its pathway is pyrimidine metabolism; CTP biosynthesis via salvage pathway; CTP from cytidine: step 1/3. The protein operates within pyrimidine metabolism; UMP biosynthesis via salvage pathway; UMP from uridine: step 1/1. In Escherichia fergusonii (strain ATCC 35469 / DSM 13698 / CCUG 18766 / IAM 14443 / JCM 21226 / LMG 7866 / NBRC 102419 / NCTC 12128 / CDC 0568-73), this protein is Uridine kinase.